The sequence spans 335 residues: Phospho-N-acetylmuramoyl-pentapeptide-transferase (335 aa).

The next 10 membrane-spanning stretches (helical) occupy residues 3 to 23, 53 to 73, 78 to 98, 118 to 138, 143 to 163, 174 to 194, 200 to 220, 226 to 246, 251 to 271, and 314 to 334; these read LTIL…PHFI, GGTV…LVYF, SLGL…IGFL, FTLQ…PSGI, VFGY…FWVV, GIDG…GVIA, FDVL…FLFN, IFMG…ISIA, WTLL…MLQV, and VDAF…AILY.

It belongs to the glycosyltransferase 4 family. MraY subfamily. Mg(2+) is required as a cofactor.

It localises to the cell membrane. The catalysed reaction is UDP-N-acetyl-alpha-D-muramoyl-L-alanyl-gamma-D-glutamyl-L-lysyl-D-alanyl-D-alanine + di-trans,octa-cis-undecaprenyl phosphate = Mur2Ac(oyl-L-Ala-gamma-D-Glu-L-Lys-D-Ala-D-Ala)-di-trans,octa-cis-undecaprenyl diphosphate + UMP. The protein operates within cell wall biogenesis; peptidoglycan biosynthesis. Its function is as follows. Catalyzes the initial step of the lipid cycle reactions in the biosynthesis of the cell wall peptidoglycan: transfers peptidoglycan precursor phospho-MurNAc-pentapeptide from UDP-MurNAc-pentapeptide onto the lipid carrier undecaprenyl phosphate, yielding undecaprenyl-pyrophosphoryl-MurNAc-pentapeptide, known as lipid I. The protein is Phospho-N-acetylmuramoyl-pentapeptide-transferase of Streptococcus equi subsp. zooepidemicus (strain MGCS10565).